Here is a 494-residue protein sequence, read N- to C-terminus: Sugiol synthase (494 aa).

Residues 3–23 traverse the membrane as a helical segment; the sequence is SFSLLAALFFISAATWFISSR. Position 437 (cysteine 437) interacts with heme.

It belongs to the cytochrome P450 family. Requires heme as cofactor. Expressed in roots.

The protein resides in the membrane. The catalysed reaction is ferruginol + 2 reduced [NADPH--hemoprotein reductase] + 2 O2 = sugiol + 2 oxidized [NADPH--hemoprotein reductase] + 3 H2O + 2 H(+). It carries out the reaction ferruginol + reduced [NADPH--hemoprotein reductase] + O2 = 11-hydroxyferruginol + oxidized [NADPH--hemoprotein reductase] + H2O + H(+). It catalyses the reaction 11-hydroxyferruginol + 2 reduced [NADPH--hemoprotein reductase] + 2 O2 = 11-hydroxysugiol + 2 oxidized [NADPH--hemoprotein reductase] + 3 H2O + 2 H(+). The protein operates within secondary metabolite biosynthesis; terpenoid biosynthesis. Its function is as follows. Monooxygenase that oxidizes ferruginol to produce sugiol. Oxidizes ferruginol at C-12 to produce 11-hydroxyferruginol. Can oxidize 11-hydroxyferruginol to 11-hydroxysugiol. These products are intermediates in tanshinone biosynthesis. In Salvia miltiorrhiza (Chinese sage), this protein is Sugiol synthase.